The sequence spans 359 residues: 1-deoxy-D-xylulose 5-phosphate reductoisomerase (359 aa).

Residues T7, G8, S9, I10, G31, K32, N33, and N111 each coordinate NADPH. K112 lines the 1-deoxy-D-xylulose 5-phosphate pocket. E113 is an NADPH binding site. D131 is a binding site for Mn(2+). Positions 132, 133, 155, and 178 each coordinate 1-deoxy-D-xylulose 5-phosphate. E133 contacts Mn(2+). Residue G184 coordinates NADPH. Residues S191, N196, K197, and E200 each contribute to the 1-deoxy-D-xylulose 5-phosphate site. A Mn(2+)-binding site is contributed by E200.

Belongs to the DXR family. It depends on Mg(2+) as a cofactor. Requires Mn(2+) as cofactor.

It carries out the reaction 2-C-methyl-D-erythritol 4-phosphate + NADP(+) = 1-deoxy-D-xylulose 5-phosphate + NADPH + H(+). It participates in isoprenoid biosynthesis; isopentenyl diphosphate biosynthesis via DXP pathway; isopentenyl diphosphate from 1-deoxy-D-xylulose 5-phosphate: step 1/6. In terms of biological role, catalyzes the NADPH-dependent rearrangement and reduction of 1-deoxy-D-xylulose-5-phosphate (DXP) to 2-C-methyl-D-erythritol 4-phosphate (MEP). This Campylobacter lari (strain RM2100 / D67 / ATCC BAA-1060) protein is 1-deoxy-D-xylulose 5-phosphate reductoisomerase.